Consider the following 86-residue polypeptide: Large ribosomal subunit protein bL31B (86 aa).

Belongs to the bacterial ribosomal protein bL31 family. Type B subfamily. As to quaternary structure, part of the 50S ribosomal subunit.

This chain is Large ribosomal subunit protein bL31B, found in Streptococcus uberis (strain ATCC BAA-854 / 0140J).